Consider the following 3392-residue polypeptide: Genome polyprotein (3392 aa).

The Cytoplasmic segment spans residues Met-1 to Ser-101. Residues Phe-33 to Lys-74 are hydrophobic; homodimerization of capsid protein C. A propeptide spans Ser-101–Ala-114 (ER anchor for the protein C, removed in mature form by serine protease NS3). Residues Val-102 to Thr-119 form a helical membrane-spanning segment. Topologically, residues Arg-120 to Leu-242 are extracellular. The N-linked (GlcNAc...) asparagine; by host glycan is linked to Asn-183. A helical membrane pass occupies residues Arg-243–Thr-260. Ser-261 is a topological domain (cytoplasmic). A helical transmembrane segment spans residues Ile-262–Ala-280. Residues Met-281–Gly-725 are Extracellular-facing. Disulfide bonds link Cys-283–Cys-310, Cys-340–Cys-401, Cys-354–Cys-385, and Cys-372–Cys-396. A glycan (N-linked (GlcNAc...) asparagine; by host) is linked at Asn-347. N-linked (GlcNAc...) asparagine; by host glycosylation is present at Asn-433. Cystine bridges form between Cys-465–Cys-565 and Cys-582–Cys-613. The helical intramembrane region spans Val-726 to Leu-746. Residues Gly-747–Ser-752 are Extracellular-facing. The helical intramembrane region spans Thr-753 to Ala-775. The Extracellular segment spans residues Asp-776–Val-1125. 6 disulfide bridges follow: Cys-779-Cys-790, Cys-830-Cys-918, Cys-954-Cys-998, Cys-1055-Cys-1104, Cys-1066-Cys-1088, and Cys-1087-Cys-1091. Asn-905 and Asn-982 each carry an N-linked (GlcNAc...) asparagine; by host glycan. Residues Ser-1126–Ile-1146 form a helical membrane-spanning segment. At Glu-1147 to Lys-1157 the chain is on the cytoplasmic side. The helical transmembrane segment at Met-1158–Asn-1178 threads the bilayer. Residues Asp-1179–Thr-1199 lie on the Lumenal side of the membrane. Asn-1190 carries N-linked (GlcNAc...) asparagine; by host glycosylation. Residues Thr-1200–Phe-1220 form a helical membrane-spanning segment. At Arg-1221–Asp-1289 the chain is on the cytoplasmic side. A helical membrane pass occupies residues Tyr-1290–Ser-1310. Residues Thr-1311–Lys-1315 are Lumenal-facing. A helical membrane pass occupies residues Thr-1316 to Ile-1336. Topologically, residues Thr-1337–Ser-1346 are cytoplasmic. A helical transmembrane segment spans residues Trp-1347–Leu-1367. The Lumenal portion of the chain corresponds to Lys-1368–Asp-1370. The helical transmembrane segment at Val-1371–Gly-1391 threads the bilayer. Residues Ser-1392–Thr-1447 lie on the Cytoplasmic side of the membrane. An interacts with and activates NS3 protease region spans residues Leu-1398–Asp-1437. Positions Leu-1448 to Phe-1468 form an intramembrane region, helical. Residues Trp-1469–Thr-2148 lie on the Cytoplasmic side of the membrane. The Peptidase S7 domain maps to Ser-1476–Glu-1653. Catalysis depends on charge relay system; for serine protease NS3 activity residues His-1526, Asp-1550, and Ser-1610. A Helicase ATP-binding domain is found at Asp-1656–Glu-1812. Position 1669–1676 (Leu-1669–Thr-1676) interacts with ATP. Positions Asp-1760–His-1763 match the DEAH box motif. The Helicase C-terminal domain occupies Ser-1822–Arg-1989. At Lys-1864 the chain carries N6-acetyllysine; by host. The helical transmembrane segment at Leu-2149 to Gly-2169 threads the bilayer. The Lumenal segment spans residues Lys-2170–Gly-2171. Positions Leu-2172 to Ala-2192 form an intramembrane region, helical. A topological domain (lumenal) is located at residue Ser-2193. Residues Val-2194 to Ile-2214 form a helical membrane-spanning segment. Residues Pro-2215–Ala-2229 are Cytoplasmic-facing. Residues Tyr-2230–Leu-2250 traverse the membrane as a helical segment. Over Glu-2251–Asp-2276 the chain is Lumenal. The segment at residues Leu-2277–Met-2297 is an intramembrane region (helical). Over Arg-2298–Pro-2349 the chain is Lumenal. 2 N-linked (GlcNAc...) asparagine; by host glycosylation sites follow: Asn-2303 and Asn-2307. Residues Leu-2350–Leu-2370 traverse the membrane as a helical segment. Residues Gln-2371–Gln-2415 are Cytoplasmic-facing. A helical transmembrane segment spans residues Ile-2416–Cys-2436. Residues Glu-2437–Thr-2461 are Lumenal-facing. An N-linked (GlcNAc...) asparagine; by host glycan is attached at Asn-2459. Residues Ile-2462 to Phe-2482 traverse the membrane as a helical segment. At Ser-2483–Trp-3392 the chain is on the cytoplasmic side. The mRNA cap 0-1 NS5-type MT domain maps to Thr-2495–His-2756. Residues Ser-2549, Gly-2579, Trp-2580, Thr-2597, Lys-2598, Asp-2624, Val-2625, Ile-2640, and Tyr-2711 each contribute to the S-adenosyl-L-methionine site. The 150-residue stretch at Asn-3021–Leu-3170 folds into the RdRp catalytic domain.

This sequence in the N-terminal section; belongs to the class I-like SAM-binding methyltransferase superfamily. mRNA cap 0-1 NS5-type methyltransferase family. As to quaternary structure, capsid protein C: Homodimer. Interacts (via N-terminus) with host EXOC1 (via C-terminus); this interaction results in EXOC1 degradation through the proteasome degradation pathway. In terms of assembly, forms heterodimers with envelope protein E in the endoplasmic reticulum and Golgi. Homodimer; in the endoplasmic reticulum and Golgi. Interacts with protein prM. Interacts with non-structural protein 1. As to quaternary structure, homodimer; Homohexamer when secreted. Interacts with envelope protein E. In terms of assembly, interacts (via N-terminus) with serine protease NS3. Forms a heterodimer with serine protease NS3. May form homooligomers. As to quaternary structure, forms a heterodimer with NS2B. Interacts with NS4B. Interacts with unphosphorylated RNA-directed RNA polymerase NS5; this interaction stimulates RNA-directed RNA polymerase NS5 guanylyltransferase activity. Interacts with host SHFL. In terms of assembly, interacts with host MAVS; this interaction inhibits the synthesis of IFN-beta. Interacts with host SHFL. Interacts with host AUP1; the interaction occurs in the presence of Dengue virus NS4B and induces lipophagy which facilitates production of virus progeny particles. Interacts with serine protease NS3. As to quaternary structure, homodimer. Interacts with host STAT2; this interaction inhibits the phosphorylation of the latter, and, when all viral proteins are present (polyprotein), targets STAT2 for degradation. Interacts with serine protease NS3. Post-translationally, specific enzymatic cleavages in vivo yield mature proteins. Cleavages in the lumen of endoplasmic reticulum are performed by host signal peptidase, wereas cleavages in the cytoplasmic side are performed by the Serine protease NS3. Signal cleavage at the 2K-4B site requires a prior NS3 protease-mediated cleavage at the 4A-2K site. In terms of processing, a C-terminally truncated form of non-structural protein 2A, results from partial cleavage by NS3. Cleaved in post-Golgi vesicles by a host furin, releasing the mature small envelope protein M, and peptide pr. This cleavage is incomplete as up to 30% of viral particles still carry uncleaved prM. Post-translationally, the excreted form is glycosylated and this is required for efficient secretion of the protein from infected cells. In terms of processing, phosphorylated on serines residues. This phosphorylation may trigger NS5 nuclear localization. N-glycosylated. Post-translationally, acetylated by host KAT5. Acetylation modulates NS3 RNA-binding and unwinding activities and plays an important positive role for viral replication.

It localises to the virion. The protein resides in the host nucleus. The protein localises to the secreted. Its subcellular location is the virion membrane. It is found in the host endoplasmic reticulum membrane. It localises to the host mitochondrion. It carries out the reaction Selective hydrolysis of -Xaa-Xaa-|-Yaa- bonds in which each of the Xaa can be either Arg or Lys and Yaa can be either Ser or Ala.. It catalyses the reaction RNA(n) + a ribonucleoside 5'-triphosphate = RNA(n+1) + diphosphate. The enzyme catalyses a ribonucleoside 5'-triphosphate + H2O = a ribonucleoside 5'-diphosphate + phosphate + H(+). The catalysed reaction is ATP + H2O = ADP + phosphate + H(+). It carries out the reaction a 5'-end (5'-triphosphoguanosine)-ribonucleoside in mRNA + S-adenosyl-L-methionine = a 5'-end (N(7)-methyl 5'-triphosphoguanosine)-ribonucleoside in mRNA + S-adenosyl-L-homocysteine. It catalyses the reaction a 5'-end (N(7)-methyl 5'-triphosphoguanosine)-ribonucleoside in mRNA + S-adenosyl-L-methionine = a 5'-end (N(7)-methyl 5'-triphosphoguanosine)-(2'-O-methyl-ribonucleoside) in mRNA + S-adenosyl-L-homocysteine + H(+). Plays a role in virus budding by binding to membrane and gathering the viral RNA into a nucleocapsid that forms the core of a mature virus particle. During virus entry, may induce genome penetration in host cytoplasm after hemifusion induced by surface proteins. Can migrate tot cell nucleus where it modulates host functions. Functionally, prevents premature fusion activity of envelope proteins in trans Golgi by binding to envelope protein E at pH6.0. After virion release in extracellular space gets dissociated from E dimers. In terms of biological role, acts as a chaperone for envelope protein E during intracellular virion assembly by masking and inactivating envelope protein E fusion peptide. prM is the only viral peptide matured by host furin in the trans-Golgi network. Presumably to avoid catastrophic activation of the viral fusion activity in acidic GolGi compartment prior to virion release. prM-E cleavage is ineficient, and many virions are only partially matured. These uncleaved prM would play a role in immune evasion. Its function is as follows. May play a role in virus budding. Exerts cytotoxic effects by activating a mitochondrial apoptotic pathway through M extodomain. May display a viroporin activity. Binds to host cell surface receptor and mediates fusion between viral and cellular membranes. Envelope protein is synthesized in the endoplasmic reticulum in the form of heterodimer with protein prM. They play a role in virion budding in the ER, and the newly formed immature particle is covered with 60 spikes composed of heterodimer between precursor prM and envelope protein E. The virion is transported to the Golgi apparatus where the low pH causes dissociation of PrM-E heterodimers and formation of E homodimers. prM-E cleavage is ineficient, and many virions are only partially matured. These uncleaved prM would play a role in immune evasion. Functionally, involved in immune evasion, pathogenesis and viral replication. Once cleaved off the polyprotein, is targeted to three destinations: the viral replication cycle, the plasma membrane and the extracellular compartment. May play a role in viral genome replication. Assist membrane bending and envelopment of genomic RNA at the endoplasmic reticulum. Excreted as a hexameric lipoparticle that plays a role against host immune response. In terms of biological role, component of the viral RNA replication complex that functions in virion assembly and antagonizes the host immune response. Its function is as follows. Required cofactor for the serine protease function of NS3. May have membrane-destabilizing activity and form viroporins. Displays three enzymatic activities: serine protease, NTPase and RNA helicase. NS3 serine protease, in association with NS2B, performs its autocleavage and cleaves the polyprotein at dibasic sites in the cytoplasm: C-prM, NS2A-NS2B, NS2B-NS3, NS3-NS4A, NS4A-2K and NS4B-NS5. NS3 RNA helicase binds RNA and unwinds dsRNA in the 3' to 5' direction. Functionally, regulates the ATPase activity of the NS3 helicase activity. NS4A allows NS3 helicase to conserve energy during unwinding. Plays a role in the inhibition of the host innate immune response. Interacts with host MAVS and thereby prevents the interaction between RIGI and MAVS. In turn, IFN-beta production is impaired. Interacts with host AUP1 which mediates induction of lipophagy in host cells and facilitates production of virus progeny particles. In terms of biological role, functions as a signal peptide for NS4B and is required for the interferon antagonism activity of the latter. Its function is as follows. Inhibits interferon (IFN)-induced host STAT1 phosphorylation and nuclear translocation, thereby preventing the establishment of cellular antiviral state by blocking the IFN-alpha/beta pathway. Replicates the viral (+) and (-) genome, and performs the capping of genomes in the cytoplasm. NS5 methylates viral RNA cap at guanine N-7 and ribose 2'-O positions. Besides its role in RNA genome replication, also prevents the establishment of cellular antiviral state by blocking the interferon-alpha/beta (IFN-alpha/beta) signaling pathway. Inhibits host TYK2 and STAT2 phosphorylation, thereby preventing activation of JAK-STAT signaling pathway. In Dengue virus type 1 (strain Brazil/97-11/1997) (DENV-1), this protein is Genome polyprotein.